A 370-amino-acid chain; its full sequence is 4-hydroxy-3-methylbut-2-en-1-yl diphosphate synthase (flavodoxin) (370 aa).

[4Fe-4S] cluster is bound by residues C270, C273, C305, and E312.

The protein belongs to the IspG family. [4Fe-4S] cluster serves as cofactor.

It catalyses the reaction (2E)-4-hydroxy-3-methylbut-2-enyl diphosphate + oxidized [flavodoxin] + H2O + 2 H(+) = 2-C-methyl-D-erythritol 2,4-cyclic diphosphate + reduced [flavodoxin]. It functions in the pathway isoprenoid biosynthesis; isopentenyl diphosphate biosynthesis via DXP pathway; isopentenyl diphosphate from 1-deoxy-D-xylulose 5-phosphate: step 5/6. Its function is as follows. Converts 2C-methyl-D-erythritol 2,4-cyclodiphosphate (ME-2,4cPP) into 1-hydroxy-2-methyl-2-(E)-butenyl 4-diphosphate. The chain is 4-hydroxy-3-methylbut-2-en-1-yl diphosphate synthase (flavodoxin) from Marinomonas sp. (strain MWYL1).